A 339-amino-acid chain; its full sequence is MGYSYRQAGVDIDAGNQAVELMKPAVKRTVRPEVMGGLGGFGGLFALDLKKYPEPVLVSGTDGVGTKLKLAFQMNRHDTIGQDAVAMCVNDILVQGAEPLFFLDYLAVGKLVPERVAQVVGGIAKGCELAGCALIGGETAEMPGFYDEGEYDIAGFAVGAVNRPDLIDGSQIQAGDVLIGLPSSGFHSNGYSLVRKIFTPDLWEKNYPELGETLGEALIRPTRIYVKTVLPLIESRKVLGMAHITGGGLTENIPRILPEGLGIKIARSAWQVPALFTLLQRLGEVEEAEMLRTFNMGIGFVLIVHPEDVDFIQTQLQAAGEKCFVLGEVSGQSEGVSYL.

The protein belongs to the AIR synthase family.

The protein localises to the cytoplasm. It carries out the reaction 2-formamido-N(1)-(5-O-phospho-beta-D-ribosyl)acetamidine + ATP = 5-amino-1-(5-phospho-beta-D-ribosyl)imidazole + ADP + phosphate + H(+). It participates in purine metabolism; IMP biosynthesis via de novo pathway; 5-amino-1-(5-phospho-D-ribosyl)imidazole from N(2)-formyl-N(1)-(5-phospho-D-ribosyl)glycinamide: step 2/2. This chain is Phosphoribosylformylglycinamidine cyclo-ligase, found in Desulfitobacterium hafniense (strain DSM 10664 / DCB-2).